The sequence spans 282 residues: Pantothenate synthetase (282 aa).

30–37 is an ATP binding site; sequence MGYLHEGH. H37 functions as the Proton donor in the catalytic mechanism. Q61 is a binding site for (R)-pantoate. Position 61 (Q61) interacts with beta-alanine. 147 to 150 lines the ATP pocket; that stretch reads GMKD. Q153 is a (R)-pantoate binding site. ATP-binding positions include V176 and 184 to 187; that span reads KSSR.

This sequence belongs to the pantothenate synthetase family. As to quaternary structure, homodimer.

The protein resides in the cytoplasm. It carries out the reaction (R)-pantoate + beta-alanine + ATP = (R)-pantothenate + AMP + diphosphate + H(+). Its pathway is cofactor biosynthesis; (R)-pantothenate biosynthesis; (R)-pantothenate from (R)-pantoate and beta-alanine: step 1/1. Functionally, catalyzes the condensation of pantoate with beta-alanine in an ATP-dependent reaction via a pantoyl-adenylate intermediate. In Bacillus cereus (strain B4264), this protein is Pantothenate synthetase.